A 696-amino-acid polypeptide reads, in one-letter code: GPI mannosyltransferase 4 (696 aa).

Helical transmembrane passes span 100 to 120 (WQLE…IYTL), 125 to 142 (NDYC…RFEI), 149 to 169 (SSWI…EMAM), 185 to 205 (NTVV…ESIS), 227 to 247 (AMST…LFGA), and 338 to 358 (YVHL…ASLG).

Belongs to the glycosyltransferase 22 family. PIGZ subfamily.

The protein resides in the endoplasmic reticulum membrane. Its pathway is glycolipid biosynthesis; glycosylphosphatidylinositol-anchor biosynthesis. Functionally, mannosyltransferase involved in glycosylphosphatidylinositol-anchor biosynthesis. Transfers a fourth mannose to some trimannosyl-GPIs during GPI precursor assembly. The polypeptide is GPI mannosyltransferase 4 (Drosophila melanogaster (Fruit fly)).